The sequence spans 545 residues: CTP synthase (545 aa).

The tract at residues 1–266 is amidoligase domain; that stretch reads MTTNYIFVTG…DDYICKRFSL (266 aa). Ser-14 contributes to the CTP binding site. Ser-14 lines the UTP pocket. Residues 15 to 20 and Asp-72 contribute to the ATP site; that span reads SLGKGI. 2 residues coordinate Mg(2+): Asp-72 and Glu-140. Residues 147-149, 187-192, and Lys-223 each bind CTP; these read DIE and KTKPTQ. UTP is bound by residues 187-192 and Lys-223; that span reads KTKPTQ. 239–241 serves as a coordination point for ATP; sequence KDV. A Glutamine amidotransferase type-1 domain is found at 291–542; the sequence is TIGMVGKYIE…VKAASEHQKR (252 aa). Gly-352 contacts L-glutamine. Cys-379 acts as the Nucleophile; for glutamine hydrolysis in catalysis. L-glutamine-binding positions include 380–383, Glu-403, and Arg-470; that span reads LGMQ. Residues His-515 and Glu-517 contribute to the active site.

This sequence belongs to the CTP synthase family. In terms of assembly, homotetramer.

The catalysed reaction is UTP + L-glutamine + ATP + H2O = CTP + L-glutamate + ADP + phosphate + 2 H(+). The enzyme catalyses L-glutamine + H2O = L-glutamate + NH4(+). It catalyses the reaction UTP + NH4(+) + ATP = CTP + ADP + phosphate + 2 H(+). The protein operates within pyrimidine metabolism; CTP biosynthesis via de novo pathway; CTP from UDP: step 2/2. Allosterically activated by GTP, when glutamine is the substrate; GTP has no effect on the reaction when ammonia is the substrate. The allosteric effector GTP functions by stabilizing the protein conformation that binds the tetrahedral intermediate(s) formed during glutamine hydrolysis. Inhibited by the product CTP, via allosteric rather than competitive inhibition. In terms of biological role, catalyzes the ATP-dependent amination of UTP to CTP with either L-glutamine or ammonia as the source of nitrogen. Regulates intracellular CTP levels through interactions with the four ribonucleotide triphosphates. The polypeptide is CTP synthase (Salmonella schwarzengrund (strain CVM19633)).